The sequence spans 188 residues: Cell division protein SepF (188 aa).

Positions 29-53 are disordered; the sequence is EQQDQDQRATQADGGALATLGDSNP.

Belongs to the SepF family. Homodimer. Interacts with FtsZ.

The protein localises to the cytoplasm. Its function is as follows. Cell division protein that is part of the divisome complex and is recruited early to the Z-ring. Probably stimulates Z-ring formation, perhaps through the cross-linking of FtsZ protofilaments. Its function overlaps with FtsA. This Synechococcus sp. (strain CC9902) protein is Cell division protein SepF.